We begin with the raw amino-acid sequence, 371 residues long: tRNA-specific 2-thiouridylase MnmA (371 aa).

ATP is bound by residues 14 to 21 (GMSGGVDS) and M40. The segment at 100-102 (NPD) is interaction with target base in tRNA. C105 serves as the catalytic Nucleophile. C105 and C205 form a disulfide bridge. Position 129 (G129) interacts with ATP. The interval 155–157 (KDQ) is interaction with tRNA. The active-site Cysteine persulfide intermediate is C205. The interaction with tRNA stretch occupies residues 321–322 (RY).

Belongs to the MnmA/TRMU family.

It is found in the cytoplasm. It carries out the reaction S-sulfanyl-L-cysteinyl-[protein] + uridine(34) in tRNA + AH2 + ATP = 2-thiouridine(34) in tRNA + L-cysteinyl-[protein] + A + AMP + diphosphate + H(+). Catalyzes the 2-thiolation of uridine at the wobble position (U34) of tRNA, leading to the formation of s(2)U34. The chain is tRNA-specific 2-thiouridylase MnmA from Bordetella pertussis (strain Tohama I / ATCC BAA-589 / NCTC 13251).